A 552-amino-acid chain; its full sequence is MSAIALTVSMLALVAVLGLWIGNWKIYGVGLGIGGVLFGGIIVGHFAQTYQIVLNGDMLHFIQEFGLILFVYTIGIQVGPGFFSSLRVSGLRLNCFAILMVVVGGLVTAIIHKLFAVPLPIILGVFSGAVTNTPALGAAQQILTDLGSPPQLVSQMGMGYAMAYPFGICGILLVMWLIRLFFKINIDREAKAFDSSYGQNRELLQTMNVAVRNPNLHGLSVQDVPLLNSDEVVCSRLKRGDLLMVPMPATVIEIGDYLHLVGQRDALEKVRLVVGEEVDVTLSTAGTALQTARVVVTNEAVLGKKIRDLNLKQKYDVVITRLNRAGIELVASNSANLQFGDILNLVGRPEAIEAVSAIVGNAQQKLQQVQMLPVFIGVGLGVLLGSIPLFVPGFPAALRLGLAGGPLVVALILGRIGSIGKLYWFMPPSANLALRELGIVLFLSVVGLKSGGDFINTLVNGDGLAWIGYGAMITGIPLLTVGILARMLVKMNYLTLCGMLAGSMTDPPALAFANGLHPTSGAAALSYATVYPLAMFLRIMSPQILAVLFWTL.

A run of 6 helical transmembrane segments spans residues Met1–Ile21, Ile26–Phe46, Phe65–Ser85, Phe96–Ala116, Leu119–Ala139, and Met158–Ile178. RCK C-terminal domains lie at Ala192–Glu276 and Asp279–Asn361. Helical transmembrane passes span Met371–Val391, Gly393–Leu413, Ile439–Val459, Leu464–Leu484, Tyr493–Ala513, and Val530–Trp550.

Belongs to the AAE transporter (TC 2.A.81) family. YidE subfamily.

Its subcellular location is the cell membrane. The sequence is that of Putative transport protein YPTS_4123 from Yersinia pseudotuberculosis serotype IB (strain PB1/+).